Here is a 334-residue protein sequence, read N- to C-terminus: Nucleoid-associated protein VS_0951 (334 aa).

The protein belongs to the YejK family.

The protein localises to the cytoplasm. Its subcellular location is the nucleoid. In Vibrio atlanticus (strain LGP32) (Vibrio splendidus (strain Mel32)), this protein is Nucleoid-associated protein VS_0951.